The chain runs to 253 residues: Putative ankyrin repeat protein NMB1133/NMB1171 (253 aa).

ANK repeat units follow at residues 196-225 and 229-252; these read DGYTPLHHEAIAGNALMVQAMLEYGANPAS and EGYTALDFACLTGWQNVADLLEPR.

This Neisseria meningitidis serogroup B (strain ATCC BAA-335 / MC58) protein is Putative ankyrin repeat protein NMB1133/NMB1171.